The primary structure comprises 652 residues: MVDLFQWLKFYSMRRLGQVAITLVLLNLFVFLGYKFTPSTVIGSPSWEPAVVPTVFNESYLDSLQFTDINVDSFLSDTNGRISVTCDSLAYKGLVKTSKKKELDCDMAYIRRKIFSSEEYGVLADLEAQDITEEQRIKKHWFTFYGSSVYLPEHEVHYLVRRVLFSKVGRADTPVISLLVAQLYDKDWNELTPHTLEIVNPATGNVTPQTFPQLIHVPIEWSVDDKWKGTEDPRVFLKPSKTGVSEPIVLFNLQSSLCDGKRGMFVTSPFRSDKVNLLDIEDKERPNSEKNWSPFFLDDVEVSKYSTGYVHFVYSFNPLKVIKCSLDTGACRMIYESPEEGRFGSELRGATPMVKLPVHLSLPKGKEVWVAFPRTRLRDCGCSRTTYRPVLTLFVKEGNKFYTELISSSIDFHIDVLSYDAKGESCSGSISVLIPNGIDSWDVSKKQGGKSDILTLTLSEADRNTVVVHVKGLLDYLLVLNGEGPIHDSHSFKNVLSTNHFKSDTTLLNSVKAAECAIFSSRDYCKKYGETRGEPARYAKQMENERKEKEKKEKEAKEKLEAEKAEMEEAVRKAQEAIAQKEREKEEAEQEKKAQQEAKEKEAEEKAAKEKEAKENEAKKKIIVEKLAKEQEEAEKLEAKKKLYQLQEEERS.

Residues Met1 to Arg15 lie on the Cytoplasmic side of the membrane. The helical transmembrane segment at Leu16 to Tyr34 threads the bilayer. Residues Lys35–Ser652 are Extracellular-facing. Residue Asn57 is glycosylated (N-linked (GlcNAc...) asparagine). Positions Pro535–Ser652 form a coiled coil. A disordered region spans residues Ala536 to Lys621.

This sequence belongs to the BMT family.

Its subcellular location is the membrane. Its function is as follows. Beta-mannosyltransferase involved in cell wall biosynthesis. Involved in the beta-mannosylation of outer chains of N-glycans. The sequence is that of Beta-mannosyltransferase 1 (BMT1) from Komagataella phaffii (strain ATCC 76273 / CBS 7435 / CECT 11047 / NRRL Y-11430 / Wegner 21-1) (Yeast).